A 140-amino-acid polypeptide reads, in one-letter code: ATP synthase epsilon chain (140 aa).

Belongs to the ATPase epsilon chain family. F-type ATPases have 2 components, CF(1) - the catalytic core - and CF(0) - the membrane proton channel. CF(1) has five subunits: alpha(3), beta(3), gamma(1), delta(1), epsilon(1). CF(0) has three main subunits: a, b and c.

The protein resides in the cell inner membrane. Functionally, produces ATP from ADP in the presence of a proton gradient across the membrane. This chain is ATP synthase epsilon chain, found in Bdellovibrio bacteriovorus (strain ATCC 15356 / DSM 50701 / NCIMB 9529 / HD100).